The chain runs to 496 residues: Ubiquitin carboxyl-terminal hydrolase nonstop (496 aa).

A UBP-type zinc finger spans residues 4-120 (TGCRHYQSYV…LINRKLEAKD (117 aa)). Residues Cys6, His8, Cys46, Cys49, Cys59, Cys62, Cys67, His71, His75, His81, Cys94, and Cys97 each coordinate Zn(2+). Residues 158–491 (RGLLNLGATC…EGYLLFYHKN (334 aa)) enclose the USP domain. The Nucleophile role is filled by Cys167. The Proton acceptor role is filled by His450.

It belongs to the peptidase C19 family. UBP8 subfamily. In terms of assembly, component of the SAGA transcription coactivator-HAT complex, at least composed of Ada2b, not/nonstop, Pcaf/Gcn5, Sgf11 and Spt3. In terms of tissue distribution, expressed in the optic lobe and central brain. Highly expressed in the lamina precursor cells but not in differentiated lamina neurons. Also expressed in marginal, epithelial and medulla glial cells adjacent to the lamina plexus.

The protein localises to the nucleus. It catalyses the reaction Thiol-dependent hydrolysis of ester, thioester, amide, peptide and isopeptide bonds formed by the C-terminal Gly of ubiquitin (a 76-residue protein attached to proteins as an intracellular targeting signal).. Histone deubiquitinating component of the transcription regulatory histone acetylation (HAT) complex SAGA. Catalyzes the deubiquitination of histone H2B, thereby acting as a coactivator in a large subset of genes. Required to counteract heterochromatin silencing. Controls the development of neuronal connectivity in visual system by being required for accurate axon targeting in the optic lobe. Required for expression of ecdysone-induced genes such as br/broad. The sequence is that of Ubiquitin carboxyl-terminal hydrolase nonstop (not) from Drosophila melanogaster (Fruit fly).